Consider the following 231-residue polypeptide: Triggering receptor expressed on myeloid cells 1 (231 aa).

Residues 1–20 (MRKTRLWGLLWMFFVSELLA) form the signal peptide. At 21–202 (ATKLTEEKYE…TDIIRVPVFN (182 aa)) the chain is on the extracellular side. One can recognise an Ig-like V-type domain in the interval 26-131 (EEKYELKEGQ…LFDRIRLVVT (106 aa)). A disulfide bridge connects residues cysteine 41 and cysteine 110. 2 stretches are compositionally biased toward polar residues: residues 134-157 (SSGT…TTTK) and 164-182 (TSPT…DVST). A disordered region spans residues 134 to 182 (SSGTPGSSENSTPNVYKTPPTTTKALRPLYTSPTTVTQAPPKSTADVST). N-linked (GlcNAc...) asparagine glycosylation is found at asparagine 188 and asparagine 191. The chain crosses the membrane as a helical span at residues 203–223 (IAILVAGGFLSKSLVFSVLFA). The Cytoplasmic portion of the chain corresponds to 224–231 (VTLRSFVP).

As to quaternary structure, monomer. Homomultimer; when activated. Interacts with TYROBP/DAP12. Interacts with TLR4.

The protein localises to the cell membrane. In terms of biological role, cell surface receptor that plays important roles in innate and adaptive immunity by amplifying inflammatory responses. Upon activation by various ligands such as PGLYRP1, HMGB1 or HSP70, multimerizes and forms a complex with transmembrane adapter TYROBP/DAP12. In turn, initiates a SYK-mediated cascade of tyrosine phosphorylation, activating multiple downstream mediators such as BTK, MAPK1, MAPK3 or phospholipase C-gamma. This cascade promotes the neutrophil- and macrophage-mediated release of pro-inflammatory cytokines and/or chemokines, as well as their migration and thereby amplifies inflammatory responses that are triggered by bacterial and fungal infections. By also promoting the amplification of inflammatory signals that are initially triggered by Toll-like receptor (TLR) and NOD-like receptor engagement, plays a major role in the pathophysiology of acute and chronic inflammatory diseases of different etiologies including septic shock and atherosclerosis. The sequence is that of Triggering receptor expressed on myeloid cells 1 (TREM1) from Pongo abelii (Sumatran orangutan).